Consider the following 640-residue polypeptide: Threonine--tRNA ligase (640 aa).

The TGS domain maps to 1 to 61 (MPTITLPDGS…DSDATLQIIT (61 aa)). Residues 242-533 (DHRKIGKRLG…LIEHYEGAFP (292 aa)) form a catalytic region. Zn(2+)-binding residues include cysteine 333, histidine 384, and histidine 510.

It belongs to the class-II aminoacyl-tRNA synthetase family. In terms of assembly, homodimer. The cofactor is Zn(2+).

The protein localises to the cytoplasm. It carries out the reaction tRNA(Thr) + L-threonine + ATP = L-threonyl-tRNA(Thr) + AMP + diphosphate + H(+). Functionally, catalyzes the attachment of threonine to tRNA(Thr) in a two-step reaction: L-threonine is first activated by ATP to form Thr-AMP and then transferred to the acceptor end of tRNA(Thr). Also edits incorrectly charged L-seryl-tRNA(Thr). In Pseudomonas fluorescens (strain Pf0-1), this protein is Threonine--tRNA ligase.